Reading from the N-terminus, the 837-residue chain is Semaphorin-4G (837 aa).

Positions Met-1 to Ala-17 are cleaved as a signal peptide. At Val-18–Met-673 the chain is on the extracellular side. The region spanning Arg-35–Leu-503 is the Sema domain. Residues Asn-55, Asn-111, and Asn-126 are each glycosylated (N-linked (GlcNAc...) asparagine). Cysteines 104 and 115 form a disulfide. Cystine bridges form between Cys-133/Cys-142, Cys-268/Cys-375, and Cys-292/Cys-335. An N-linked (GlcNAc...) asparagine glycan is attached at Asn-386. The 52-residue stretch at Ser-505–Glu-556 folds into the PSI domain. Disulfide bonds link Cys-506-Cys-523 and Cys-515-Cys-532. 2 N-linked (GlcNAc...) asparagine glycosylation sites follow: Asn-540 and Asn-596. The Ig-like C2-type domain occupies Pro-565–Thr-647. Cys-582 and Cys-630 are disulfide-bonded. Residues Phe-674 to Leu-694 traverse the membrane as a helical segment. Residues Tyr-695–Val-837 lie on the Cytoplasmic side of the membrane. The interval Ser-721–Leu-776 is disordered. Residues Gly-734 to Glu-743 show a composition bias toward acidic residues. The span at Pro-762–Ala-774 shows a compositional bias: pro residues. 2 positions are modified to phosphoserine: Ser-794 and Ser-836.

This sequence belongs to the semaphorin family. As to quaternary structure, interacts with PLXNB2. As to expression, brain, spinal cord, and several sensory organs as well as specific populations of projection neurons.

Its subcellular location is the cell membrane. In terms of biological role, cell surface receptor for PLXNB2. May play a role in axon guidance. This chain is Semaphorin-4G (Sema4g), found in Mus musculus (Mouse).